We begin with the raw amino-acid sequence, 63 residues long: Large ribosomal subunit protein bL32 (63 aa).

The tract at residues 1 to 23 is disordered; the sequence is MATPKAKVSKSRRDKRRAQFTAR. Residues 7–18 are compositionally biased toward basic residues; sequence KVSKSRRDKRRA.

This sequence belongs to the bacterial ribosomal protein bL32 family.

This chain is Large ribosomal subunit protein bL32, found in Chlorobium phaeobacteroides (strain BS1).